The sequence spans 164 residues: ATP synthase subunit b 1 (164 aa).

A helical transmembrane segment spans residues proline 8–valine 28.

It belongs to the ATPase B chain family. F-type ATPases have 2 components, F(1) - the catalytic core - and F(0) - the membrane proton channel. F(1) has five subunits: alpha(3), beta(3), gamma(1), delta(1), epsilon(1). F(0) has three main subunits: a(1), b(2) and c(10-14). The alpha and beta chains form an alternating ring which encloses part of the gamma chain. F(1) is attached to F(0) by a central stalk formed by the gamma and epsilon chains, while a peripheral stalk is formed by the delta and b chains.

It localises to the cell inner membrane. F(1)F(0) ATP synthase produces ATP from ADP in the presence of a proton or sodium gradient. F-type ATPases consist of two structural domains, F(1) containing the extramembraneous catalytic core and F(0) containing the membrane proton channel, linked together by a central stalk and a peripheral stalk. During catalysis, ATP synthesis in the catalytic domain of F(1) is coupled via a rotary mechanism of the central stalk subunits to proton translocation. Its function is as follows. Component of the F(0) channel, it forms part of the peripheral stalk, linking F(1) to F(0). In Rhodopseudomonas palustris (strain BisB18), this protein is ATP synthase subunit b 1.